A 344-amino-acid polypeptide reads, in one-letter code: Dihydroorotase (344 aa).

Zn(2+) contacts are provided by His-13 and His-15. Residues 15 to 17 (HFR) and Asn-41 contribute to the substrate site. Zn(2+) contacts are provided by Lys-98, His-135, and His-173. Lys-98 carries the N6-carboxylysine modification. His-135 is a binding site for substrate. Residue Leu-218 participates in substrate binding. Asp-246 contributes to the Zn(2+) binding site. Asp-246 is a catalytic residue. Positions 250 and 262 each coordinate substrate.

It belongs to the metallo-dependent hydrolases superfamily. DHOase family. Class II DHOase subfamily. In terms of assembly, homodimer. It depends on Zn(2+) as a cofactor.

It catalyses the reaction (S)-dihydroorotate + H2O = N-carbamoyl-L-aspartate + H(+). Its pathway is pyrimidine metabolism; UMP biosynthesis via de novo pathway; (S)-dihydroorotate from bicarbonate: step 3/3. In terms of biological role, catalyzes the reversible cyclization of carbamoyl aspartate to dihydroorotate. The polypeptide is Dihydroorotase (Shewanella woodyi (strain ATCC 51908 / MS32)).